We begin with the raw amino-acid sequence, 406 residues long: Phosphorylase b kinase gamma catalytic chain, liver/testis isoform (406 aa).

The 268-residue stretch at Tyr24–Phe291 folds into the Protein kinase domain. Residues Ile30–Val38 and Lys53 contribute to the ATP site. Asp153 serves as the catalytic Proton acceptor. A calmodulin-binding (domain-N) region spans residues Gln306–Pro330. Ser345 carries the post-translational modification Phosphoserine. Residues Val346–Arg370 are calmodulin-binding (domain-C).

It belongs to the protein kinase superfamily. CAMK Ser/Thr protein kinase family. In terms of assembly, hexadecamer of 4 heterotetramers, each composed of alpha, beta, gamma, and delta subunits. Alpha (PHKA1 or PHKA2) and beta (PHKB) are regulatory subunits, gamma (PHKG1 or PHKG2) is the catalytic subunit, and delta is calmodulin.

It catalyses the reaction 2 ATP + phosphorylase b = 2 ADP + phosphorylase a.. In terms of biological role, catalytic subunit of the phosphorylase b kinase (PHK), which mediates the neural and hormonal regulation of glycogen breakdown (glycogenolysis) by phosphorylating and thereby activating glycogen phosphorylase. May regulate glycogeneolysis in the testis. In vitro, phosphorylates PYGM. The protein is Phosphorylase b kinase gamma catalytic chain, liver/testis isoform (PHKG2) of Homo sapiens (Human).